Here is a 348-residue protein sequence, read N- to C-terminus: Nicotinate-nucleotide pyrophosphorylase [carboxylating], chloroplastic (348 aa).

The N-terminal 41 residues, 1–41 (MISVSRFLSPQFYAIPRSFVKMSASATQTAGEVSMGIKPPS), are a transit peptide targeting the chloroplast. Substrate is bound by residues arginine 139, 170–172 (TRK), arginine 194, lysine 204, glutamate 237, aspartate 264, 296–298 (SGN), and 317–319 (SGA).

Belongs to the NadC/ModD family.

It localises to the plastid. It is found in the chloroplast. It carries out the reaction nicotinate beta-D-ribonucleotide + CO2 + diphosphate = quinolinate + 5-phospho-alpha-D-ribose 1-diphosphate + 2 H(+). It participates in cofactor biosynthesis; NAD(+) biosynthesis; nicotinate D-ribonucleotide from quinolinate: step 1/1. Its function is as follows. Involved in the biosynthesis of NAD(+). Catalyzes the conversion of quinolate to nicotinate to nicotinate beta-D-ribonucleotide. In Arabidopsis thaliana (Mouse-ear cress), this protein is Nicotinate-nucleotide pyrophosphorylase [carboxylating], chloroplastic.